Reading from the N-terminus, the 229-residue chain is 3-dehydroquinate dehydratase (229 aa).

Residues 29–31 and arginine 56 each bind 3-dehydroquinate; that span reads ELR. Catalysis depends on histidine 120, which acts as the Proton donor/acceptor. Lysine 146 acts as the Schiff-base intermediate with substrate in catalysis. Positions 187, 208, and 212 each coordinate 3-dehydroquinate.

Belongs to the type-I 3-dehydroquinase family. Homodimer.

It carries out the reaction 3-dehydroquinate = 3-dehydroshikimate + H2O. The protein operates within metabolic intermediate biosynthesis; chorismate biosynthesis; chorismate from D-erythrose 4-phosphate and phosphoenolpyruvate: step 3/7. In terms of biological role, involved in the third step of the chorismate pathway, which leads to the biosynthesis of aromatic amino acids. Catalyzes the cis-dehydration of 3-dehydroquinate (DHQ) and introduces the first double bond of the aromatic ring to yield 3-dehydroshikimate. This chain is 3-dehydroquinate dehydratase, found in Haloarcula marismortui (strain ATCC 43049 / DSM 3752 / JCM 8966 / VKM B-1809) (Halobacterium marismortui).